Consider the following 450-residue polypeptide: Bifunctional protein GlmU (450 aa).

Residues 1–221 (MRCIVLAAGM…SCEFIGINNR (221 aa)) form a pyrophosphorylase region. Residues 6–9 (LAAG), Lys20, Gln69, 74–75 (GT), 96–98 (YGD), Gly135, Glu150, Asn165, and Asn219 each bind UDP-N-acetyl-alpha-D-glucosamine. A Mg(2+)-binding site is contributed by Asp98. Asn219 serves as a coordination point for Mg(2+). Residues 222–242 (IQLAQAEKFRRQWILEELMIK) are linker. The N-acetyltransferase stretch occupies residues 243 to 450 (GVTIVDPETT…VIDKRKKEED (208 aa)). The UDP-N-acetyl-alpha-D-glucosamine site is built by Arg324 and Lys342. His354 functions as the Proton acceptor in the catalytic mechanism. Positions 357 and 368 each coordinate UDP-N-acetyl-alpha-D-glucosamine. The acetyl-CoA site is built by Ala371, Ser396, Ala414, and Arg431.

The protein in the N-terminal section; belongs to the N-acetylglucosamine-1-phosphate uridyltransferase family. In the C-terminal section; belongs to the transferase hexapeptide repeat family. Homotrimer. The cofactor is Mg(2+).

Its subcellular location is the cytoplasm. The catalysed reaction is alpha-D-glucosamine 1-phosphate + acetyl-CoA = N-acetyl-alpha-D-glucosamine 1-phosphate + CoA + H(+). The enzyme catalyses N-acetyl-alpha-D-glucosamine 1-phosphate + UTP + H(+) = UDP-N-acetyl-alpha-D-glucosamine + diphosphate. It functions in the pathway nucleotide-sugar biosynthesis; UDP-N-acetyl-alpha-D-glucosamine biosynthesis; N-acetyl-alpha-D-glucosamine 1-phosphate from alpha-D-glucosamine 6-phosphate (route II): step 2/2. Its pathway is nucleotide-sugar biosynthesis; UDP-N-acetyl-alpha-D-glucosamine biosynthesis; UDP-N-acetyl-alpha-D-glucosamine from N-acetyl-alpha-D-glucosamine 1-phosphate: step 1/1. It participates in bacterial outer membrane biogenesis; LPS lipid A biosynthesis. Catalyzes the last two sequential reactions in the de novo biosynthetic pathway for UDP-N-acetylglucosamine (UDP-GlcNAc). The C-terminal domain catalyzes the transfer of acetyl group from acetyl coenzyme A to glucosamine-1-phosphate (GlcN-1-P) to produce N-acetylglucosamine-1-phosphate (GlcNAc-1-P), which is converted into UDP-GlcNAc by the transfer of uridine 5-monophosphate (from uridine 5-triphosphate), a reaction catalyzed by the N-terminal domain. This chain is Bifunctional protein GlmU, found in Pseudothermotoga lettingae (strain ATCC BAA-301 / DSM 14385 / NBRC 107922 / TMO) (Thermotoga lettingae).